The chain runs to 212 residues: Thymidylate kinase (212 aa).

10 to 17 (GLEGAGKT) provides a ligand contact to ATP.

This sequence belongs to the thymidylate kinase family.

The catalysed reaction is dTMP + ATP = dTDP + ADP. In terms of biological role, phosphorylation of dTMP to form dTDP in both de novo and salvage pathways of dTTP synthesis. This chain is Thymidylate kinase, found in Serratia proteamaculans (strain 568).